Here is a 466-residue protein sequence, read N- to C-terminus: Cysteine--tRNA ligase (466 aa).

C28 provides a ligand contact to Zn(2+). Positions 30 to 40 (PTVYNYIHIGN) match the 'HIGH' region motif. C208, H233, and E237 together coordinate Zn(2+). Positions 265–269 (KMSKS) match the 'KMSKS' region motif. K268 serves as a coordination point for ATP.

This sequence belongs to the class-I aminoacyl-tRNA synthetase family. As to quaternary structure, monomer. Zn(2+) is required as a cofactor.

Its subcellular location is the cytoplasm. It catalyses the reaction tRNA(Cys) + L-cysteine + ATP = L-cysteinyl-tRNA(Cys) + AMP + diphosphate. This Staphylococcus aureus (strain MRSA252) protein is Cysteine--tRNA ligase.